Here is a 239-residue protein sequence, read N- to C-terminus: ATP synthase subunit a (239 aa).

6 consecutive transmembrane segments (helical) span residues 31–51 (FLLQ…LGLG), 91–111 (VFPL…LGMI), 125–145 (AACA…FHGV), 151–171 (FMGP…IGHI), 194–214 (ILFF…LGLF), and 215–235 (TGFI…AGAI).

Belongs to the ATPase A chain family. As to quaternary structure, F-type ATPases have 2 components, CF(1) - the catalytic core - and CF(0) - the membrane proton channel. CF(1) has five subunits: alpha(3), beta(3), gamma(1), delta(1), epsilon(1). CF(0) has three main subunits: a(1), b(2) and c(9-12). The alpha and beta chains form an alternating ring which encloses part of the gamma chain. CF(1) is attached to CF(0) by a central stalk formed by the gamma and epsilon chains, while a peripheral stalk is formed by the delta and b chains.

The protein localises to the cell inner membrane. Functionally, key component of the proton channel; it plays a direct role in the translocation of protons across the membrane. In Syntrophobacter fumaroxidans (strain DSM 10017 / MPOB), this protein is ATP synthase subunit a.